A 505-amino-acid polypeptide reads, in one-letter code: Gap junction alpha-10 protein (505 aa).

At M1–S16 the chain is on the cytoplasmic side. A helical membrane pass occupies residues H17–L37. Residues G38–R76 lie on the Extracellular side of the membrane. Residues F77–L97 traverse the membrane as a helical segment. Residues Y98–S165 lie on the Cytoplasmic side of the membrane. The chain crosses the membrane as a helical span at residues V166–I186. The Extracellular portion of the chain corresponds to Y187–T209. A helical membrane pass occupies residues I210 to I230. Topologically, residues F231–Y505 are cytoplasmic. Polar residues predominate over residues T371–L383. Residues T371–P491 are disordered. Over residues M437–D446 the composition is skewed to basic and acidic residues. The segment covering S447–F460 has biased composition (low complexity).

It belongs to the connexin family. Alpha-type (group II) subfamily. As to quaternary structure, a connexon is composed of a hexamer of connexins. In terms of tissue distribution, low levels were detected in skin, heart, kidney, testis, ovary, intestine. Expression not detected in brain, sciatic nerve or liver. According to PubMed:15147297 expression is detected only in horizontal cells in the inner nuclear layer of the retina and not in other neurons of the central nervous system or tissues. Detected in the outer plexiform layer of the retina (at protein level).

It localises to the cell membrane. The protein localises to the cell junction. Its subcellular location is the gap junction. Its function is as follows. One gap junction consists of a cluster of closely packed pairs of transmembrane channels, the connexons, through which materials of low MW diffuse from one cell to a neighboring cell. Involved in tracer coupling between horizontal cells of the retina. May play a role in the regulation of horizontal cell patterning. The chain is Gap junction alpha-10 protein (Gja10) from Mus musculus (Mouse).